An 835-amino-acid chain; its full sequence is Replication origin-binding protein (835 aa).

One can recognise a Helicase ATP-binding domain in the interval 54-215 (PGMSQTRPVT…SGLRGDENIH (162 aa)). 67–74 (APMGSGKT) contacts ATP.

This sequence belongs to the herpesviridae OriBP family. Homodimer. Interacts with the major DNA-binding protein. Interacts with the helicase/primase component 52 and the polymerase accessory protein.

The protein localises to the host nucleus. Functionally, functions as a docking protein to recruit essential components of the viral replication machinery to viral DNA origins. In the presence of the major DNA-binding protein, opens dsDNA leading to a conformational change in the origin that facilitates DNA unwinding and subsequent replication. The polypeptide is Replication origin-binding protein (Varicella-zoster virus (strain Oka vaccine) (HHV-3)).